The chain runs to 204 residues: Bcl-2-like protein 10 (204 aa).

The BH1 motif lies at 86–105; it reads LSDSPGPTWGRVVTLVTFAG. Residues 118–133 are required for Ca(2+) binding; the sequence is WKKWGFQPRLKEQEGD. Residues Lys119, Lys120, and Lys128 each participate in a glycyl lysine isopeptide (Lys-Gly) (interchain with G-Cter in ubiquitin) cross-link. A BH2 motif is present at residues 156–167; that stretch reads WLQAQGGWDGFC. A helical membrane pass occupies residues 183–200; sequence LVQAFLSCLLTTAFIYLW.

This sequence belongs to the Bcl-2 family. As to quaternary structure, interacts with BAX. Interacts with BCL2 and BCL2L1/BCLX. Interacts with APAF1. Interacts with ITPR1, ITPR2 and ITPR3; the interaction with ITPR1 is increased in the presence of AHCLY1. Interacts with AHCYL1. Interacts with HIP1R (via ENTH and I/LWEQ domains). Interacts with CASP9. Interacts with BCL2L11/BIM. Interacts with BIK. Interacts with UBQLN4. Interacts with NME2/NM23-H2. Interacts with PMAIP1/NOXA. Interacts with TPX2. Interacts with UBQLN1; in the cytoplasm. Interacts (via BH1 domain) with BECN1. The cofactor is Ca(2+). Post-translationally, monoubiquitinated by UBQLN1; results in stabilization of BCL2L10 protein abundance and in relocalization from mitochondria to cytoplasm. Widely expressed in adult tissues. Preferentially expressed in lung, liver and kidney.

It is found in the mitochondrion. The protein localises to the nucleus membrane. It localises to the endoplasmic reticulum. The protein resides in the cytoplasm. Its subcellular location is the cytoskeleton. It is found in the spindle. Its function is as follows. Promotes cell survival by suppressing apoptosis induced by BAX but not BAK. Increases binding of AHCYL1/IRBIT to ITPR1. Reduces ITPR1-mediated calcium release from the endoplasmic reticulum cooperatively with AHCYL1/IRBIT under normal cellular conditions. Under apoptotic stress conditions, dissociates from ITPR1 and is displaced from mitochondria-associated endoplasmic reticulum membranes, leading to increased Ca(2+) transfer to mitochondria which promotes apoptosis. Required for the correct formation of the microtubule organizing center during oocyte cell division, potentially via regulation of protein abundance and localization of other microtubule organizing center components such as AURKA and TPX2. The sequence is that of Bcl-2-like protein 10 from Homo sapiens (Human).